The primary structure comprises 670 residues: Receptor for retinol uptake stra6 (670 aa).

Over 1-38 (MSAETVNNYDYSDWYENAAPTKAPVEVIPPCDPTADEG) the chain is Extracellular. A helical transmembrane segment spans residues 39–59 (LFHICIAAISLVVMLVLAILA). Residues 60–87 (RRQKLSDNQRGLTGLLSPVNFLDHTQHK) lie on the Cytoplasmic side of the membrane. Residues 88 to 108 (GLAVAVYGVLFCKLVGMVLSH) traverse the membrane as a helical segment. The Extracellular segment spans residues 109–121 (HPLPFTKEVANKE). Residues 122–142 (FWMILALLYYPALYYPLLACG) traverse the membrane as a helical segment. The Cytoplasmic segment spans residues 143-145 (TLH). Residues 146–166 (NKVGYVLGSLLSWTHFGILVW) form a helical membrane-spanning segment. Over 167-182 (QKVDCPKTPQIYKYYA) the chain is Extracellular. The chain crosses the membrane as a helical span at residues 183-203 (LFGSLPQIACLAFLSFQYPLL). Residues 204-274 (LFKGLQNTET…PEDVFRFPLK (71 aa)) are Cytoplasmic-facing. Residues 275–295 (LAISVVVAFIALYQMALLLIS) traverse the membrane as a helical segment. Topologically, residues 296 to 346 (GVLPTLHIVRRGVDENIAFLLAGFNIILSNDRQEVVRIVVYYLWCVEICYV) are extracellular. A helical membrane pass occupies residues 347–367 (SAVTLSCLVNLLMLMRSMVLH). At 368–401 (RSNLKGLYRGDSLNVFNCHRSIRPSRPALVCWMG) the chain is on the cytoplasmic side. The chain crosses the membrane as a helical span at residues 402–422 (FTSYQAAFLCLGMAIQTLVFF). Topologically, residues 423-452 (ICILFAVFLIIIPILWGTNLMLFHIIGNLW) are extracellular. A helical transmembrane segment spans residues 453-473 (PFWLTLVLAALIQHVASRFLF). Residues 474-488 (IRKDGGTRDLNNRGS) are Cytoplasmic-facing. Residues 489 to 526 (LFLLSYILFLVNVMIGVVLGIWRVVITALFNIVHLGRL) constitute an intramembrane region (helical). Residues 527-670 (DISLLNRNVE…KEAESAAASN (144 aa)) lie on the Cytoplasmic side of the membrane. The interaction with calmodulin stretch occupies residues 600–626 (VSNAKRARAHWQLLYTLVNNPSLVGSR). The disordered stretch occupies residues 640 to 670 (GALSRTSKEGSKKDGSVNEPSKEAESAAASN). Residues 645–664 (TSKEGSKKDGSVNEPSKEAE) are compositionally biased toward basic and acidic residues.

Homodimer. Interacts (via C-terminus) with calmodulin.

Its subcellular location is the cell membrane. Its function is as follows. Retinol transporter. Accepts retinol from the extracellular retinol-binding protein rbp4, mediates retinol transport across the cell membrane, and then transmits retinol to the cytoplasmic retinol-binding protein rbp1. Required for normal vitamin A homeostasis. This Danio rerio (Zebrafish) protein is Receptor for retinol uptake stra6.